The following is a 335-amino-acid chain: Aspartate--ammonia ligase (335 aa).

This sequence belongs to the class-II aminoacyl-tRNA synthetase family. AsnA subfamily.

It is found in the cytoplasm. The catalysed reaction is L-aspartate + NH4(+) + ATP = L-asparagine + AMP + diphosphate + H(+). It participates in amino-acid biosynthesis; L-asparagine biosynthesis; L-asparagine from L-aspartate (ammonia route): step 1/1. The chain is Aspartate--ammonia ligase from Levilactobacillus brevis (strain ATCC 367 / BCRC 12310 / CIP 105137 / JCM 1170 / LMG 11437 / NCIMB 947 / NCTC 947) (Lactobacillus brevis).